The sequence spans 179 residues: uncharacterized protein (179 aa).

The next 3 membrane-spanning stretches (helical) occupy residues 29-49, 76-96, and 97-117; these read LLGISFFCLVIIMATSLGPLI, AKHMLVFWMVFGILTSLDAYS, and GAIISFIPLWYTMKFFFLLWA.

This sequence belongs to the DP1 family.

The protein localises to the membrane. This is an uncharacterized protein from Encephalitozoon cuniculi (strain GB-M1) (Microsporidian parasite).